Here is a 468-residue protein sequence, read N- to C-terminus: Glutamate--tRNA ligase (468 aa).

The 'HIGH' region motif lies at 11-21; that stretch reads PSPTGFIHLGN. Residues 243–247 carry the 'KMSKS' region motif; it reads KMSKR. Lys-246 contacts ATP.

This sequence belongs to the class-I aminoacyl-tRNA synthetase family. Glutamate--tRNA ligase type 1 subfamily. In terms of assembly, monomer.

It localises to the cytoplasm. It catalyses the reaction tRNA(Glu) + L-glutamate + ATP = L-glutamyl-tRNA(Glu) + AMP + diphosphate. Functionally, catalyzes the attachment of glutamate to tRNA(Glu) in a two-step reaction: glutamate is first activated by ATP to form Glu-AMP and then transferred to the acceptor end of tRNA(Glu). The sequence is that of Glutamate--tRNA ligase from Delftia acidovorans (strain DSM 14801 / SPH-1).